A 239-amino-acid polypeptide reads, in one-letter code: tRNA (guanine-N(7)-)-methyltransferase (239 aa).

Residues Glu-69, Glu-94, Asp-121, and Asp-144 each coordinate S-adenosyl-L-methionine. Asp-144 is a catalytic residue. Lys-148 lines the substrate pocket. An interaction with RNA region spans residues 150-155 (RHNKRR). Residues Asp-180 and 217-220 (TKFE) each bind substrate.

Belongs to the class I-like SAM-binding methyltransferase superfamily. TrmB family. Monomer.

It carries out the reaction guanosine(46) in tRNA + S-adenosyl-L-methionine = N(7)-methylguanosine(46) in tRNA + S-adenosyl-L-homocysteine. The protein operates within tRNA modification; N(7)-methylguanine-tRNA biosynthesis. Catalyzes the formation of N(7)-methylguanine at position 46 (m7G46) in tRNA. The polypeptide is tRNA (guanine-N(7)-)-methyltransferase (Yersinia pestis (strain Pestoides F)).